The following is a 449-amino-acid chain: Tubulin alpha-B chain (449 aa).

GTP contacts are provided by glutamine 11, glutamate 71, serine 140, glycine 144, threonine 145, threonine 179, asparagine 206, and asparagine 228. A Mg(2+)-binding site is contributed by glutamate 71. Residue glutamate 254 is part of the active site.

The protein belongs to the tubulin family. Dimer of alpha and beta chains. A typical microtubule is a hollow water-filled tube with an outer diameter of 25 nm and an inner diameter of 15 nM. Alpha-beta heterodimers associate head-to-tail to form protofilaments running lengthwise along the microtubule wall with the beta-tubulin subunit facing the microtubule plus end conferring a structural polarity. Microtubules usually have 13 protofilaments but different protofilament numbers can be found in some organisms and specialized cells. Mg(2+) serves as cofactor.

The protein resides in the cytoplasm. It localises to the cytoskeleton. It carries out the reaction GTP + H2O = GDP + phosphate + H(+). Tubulin is the major constituent of microtubules, a cylinder consisting of laterally associated linear protofilaments composed of alpha- and beta-tubulin heterodimers. Microtubules grow by the addition of GTP-tubulin dimers to the microtubule end, where a stabilizing cap forms. Below the cap, tubulin dimers are in GDP-bound state, owing to GTPase activity of alpha-tubulin. This chain is Tubulin alpha-B chain (tba-2), found in Neurospora crassa (strain ATCC 24698 / 74-OR23-1A / CBS 708.71 / DSM 1257 / FGSC 987).